The chain runs to 478 residues: Isoeugenol monooxygenase (478 aa).

Fe cation contacts are provided by histidine 167, histidine 218, histidine 282, and histidine 471.

Belongs to the carotenoid oxygenase family. As to quaternary structure, monomer. It depends on Fe(2+) as a cofactor.

The enzyme catalyses (E)-isoeugenol + O2 = vanillin + acetaldehyde. Inhibited by HgCl(2), AgNO(3), CuCl(2), phenylhydrazine, 8-hydroxyquinoline, R-cycloserine and p-chloromercuribenzoic acid. Its function is as follows. Involved in isoeugenol degradation. Catalyzes the oxidative cleavage of the side chain double-bond of isoeugenol to form vanillin and acetaldehyde. The polypeptide is Isoeugenol monooxygenase (Pseudomonas putida (Arthrobacter siderocapsulatus)).